The following is a 137-amino-acid chain: Transcription antitermination protein NusB (137 aa).

This sequence belongs to the NusB family.

Involved in transcription antitermination. Required for transcription of ribosomal RNA (rRNA) genes. Binds specifically to the boxA antiterminator sequence of the ribosomal RNA (rrn) operons. This chain is Transcription antitermination protein NusB, found in Aeromonas salmonicida (strain A449).